The following is a 258-amino-acid chain: UPF0246 protein YaaA (258 aa).

Belongs to the UPF0246 family.

This chain is UPF0246 protein YaaA, found in Escherichia coli O157:H7 (strain EC4115 / EHEC).